The chain runs to 156 residues: Small ribosomal subunit protein uS7 (156 aa).

Belongs to the universal ribosomal protein uS7 family. Part of the 30S ribosomal subunit. Contacts proteins S9 and S11.

Functionally, one of the primary rRNA binding proteins, it binds directly to 16S rRNA where it nucleates assembly of the head domain of the 30S subunit. Is located at the subunit interface close to the decoding center, probably blocks exit of the E-site tRNA. The sequence is that of Small ribosomal subunit protein uS7 from Streptococcus thermophilus (strain CNRZ 1066).